A 343-amino-acid polypeptide reads, in one-letter code: Selenide, water dikinase (343 aa).

The active site involves U15. A non-standard amino acid (selenocysteine) is located at residue U15. ATP contacts are provided by residues K18 and 45-47; that span reads TAD. Residue D48 participates in Mg(2+) binding. ATP is bound by residues D65, D88, and 135-137; that span reads GHT. D88 serves as a coordination point for Mg(2+). D223 provides a ligand contact to Mg(2+).

It belongs to the selenophosphate synthase 1 family. Class I subfamily. In terms of assembly, homodimer. Mg(2+) is required as a cofactor.

The enzyme catalyses hydrogenselenide + ATP + H2O = selenophosphate + AMP + phosphate + 2 H(+). Functionally, synthesizes selenophosphate from selenide and ATP. The sequence is that of Selenide, water dikinase from Carboxydothermus hydrogenoformans (strain ATCC BAA-161 / DSM 6008 / Z-2901).